The primary structure comprises 95 residues: Co-chaperonin GroES (95 aa).

Belongs to the GroES chaperonin family. As to quaternary structure, heptamer of 7 subunits arranged in a ring. Interacts with the chaperonin GroEL.

The protein resides in the cytoplasm. Its function is as follows. Together with the chaperonin GroEL, plays an essential role in assisting protein folding. The GroEL-GroES system forms a nano-cage that allows encapsulation of the non-native substrate proteins and provides a physical environment optimized to promote and accelerate protein folding. GroES binds to the apical surface of the GroEL ring, thereby capping the opening of the GroEL channel. The sequence is that of Co-chaperonin GroES from Chlorobium phaeobacteroides (strain BS1).